A 194-amino-acid polypeptide reads, in one-letter code: Holliday junction branch migration complex subunit RuvA (194 aa).

A domain I region spans residues 1–64; that stretch reads MISRLTGKLV…EDAHLLFGFA (64 aa). The domain II stretch occupies residues 65–143; that stretch reads TAEERKTFRQ…AHTVTDGLFA (79 aa). A flexible linker region spans residues 144-147; the sequence is AAPA. A domain III region spans residues 147 to 194; it reads AADETEDIVSTLLALGYSEREAKAAVKGVPEGTDVGEGVRLALKNLLK.

Belongs to the RuvA family. Homotetramer. Forms an RuvA(8)-RuvB(12)-Holliday junction (HJ) complex. HJ DNA is sandwiched between 2 RuvA tetramers; dsDNA enters through RuvA and exits via RuvB. An RuvB hexamer assembles on each DNA strand where it exits the tetramer. Each RuvB hexamer is contacted by two RuvA subunits (via domain III) on 2 adjacent RuvB subunits; this complex drives branch migration. In the full resolvosome a probable DNA-RuvA(4)-RuvB(12)-RuvC(2) complex forms which resolves the HJ.

It is found in the cytoplasm. Its function is as follows. The RuvA-RuvB-RuvC complex processes Holliday junction (HJ) DNA during genetic recombination and DNA repair, while the RuvA-RuvB complex plays an important role in the rescue of blocked DNA replication forks via replication fork reversal (RFR). RuvA specifically binds to HJ cruciform DNA, conferring on it an open structure. The RuvB hexamer acts as an ATP-dependent pump, pulling dsDNA into and through the RuvAB complex. HJ branch migration allows RuvC to scan DNA until it finds its consensus sequence, where it cleaves and resolves the cruciform DNA. In Neisseria meningitidis serogroup B (strain ATCC BAA-335 / MC58), this protein is Holliday junction branch migration complex subunit RuvA.